The chain runs to 73 residues: Large ribosomal subunit protein uL29 (73 aa).

It belongs to the universal ribosomal protein uL29 family.

The polypeptide is Large ribosomal subunit protein uL29 (Synechococcus sp. (strain JA-2-3B'a(2-13)) (Cyanobacteria bacterium Yellowstone B-Prime)).